Consider the following 567-residue polypeptide: Urease subunit alpha (567 aa).

Residues 129-567 enclose the Urease domain; sequence GGIDVHVHFI…VPMSQRYFLF (439 aa). Ni(2+) is bound by residues H134, H136, and K217. K217 is modified (N6-carboxylysine). Position 219 (H219) interacts with substrate. Ni(2+) contacts are provided by H246 and H272. The Proton donor role is filled by H320. D360 is a Ni(2+) binding site.

Belongs to the metallo-dependent hydrolases superfamily. Urease alpha subunit family. Heterotrimer of UreA (gamma), UreB (beta) and UreC (alpha) subunits. Three heterotrimers associate to form the active enzyme. It depends on Ni cation as a cofactor. Carboxylation allows a single lysine to coordinate two nickel ions.

The protein localises to the cytoplasm. The enzyme catalyses urea + 2 H2O + H(+) = hydrogencarbonate + 2 NH4(+). Its pathway is nitrogen metabolism; urea degradation; CO(2) and NH(3) from urea (urease route): step 1/1. The protein is Urease subunit alpha of Blochmanniella floridana.